Reading from the N-terminus, the 456-residue chain is Serine/threonine-protein kinase meng-po (456 aa).

The interval 15–78 (RSFGDGGSTN…RSSIYKKPDK (64 aa)) is disordered. Positions 22–55 (STNSRNSNNNSSTCTNHNNQKRCSTPLTPTSTST) are enriched in low complexity. Residues 101-367 (YNIEKTLAEG…VAKYMKDRWV (267 aa)) enclose the Protein kinase domain. ATP is bound by residues 107–115 (LAEGCFAKI) and Lys130. The active-site Proton acceptor is Asp221. A Phosphoserine; by PKA modification is found at Ser334.

It belongs to the protein kinase superfamily. Ser/Thr protein kinase family. The cofactor is Mg(2+). Expressed in the mushroom bodies (at protein level).

The catalysed reaction is L-seryl-[protein] + ATP = O-phospho-L-seryl-[protein] + ADP + H(+). It catalyses the reaction L-threonyl-[protein] + ATP = O-phospho-L-threonyl-[protein] + ADP + H(+). Its activity is regulated as follows. Activated by Pka-C1-mediated phosphorylation of Ser-334. Functionally, serine/threonine-protein kinase involved in memory formation. Together with the cAMP-dependent protein kinase A Pka-C1, promotes long-term memory (LTM) by regulating CrebB stability and activity. Involved in the maintenance of anesthesia-sensitive memory (ASM) which includes short-term memory (STM) and middle-term memory (MTM). This chain is Serine/threonine-protein kinase meng-po, found in Drosophila melanogaster (Fruit fly).